The sequence spans 290 residues: ATP synthase gamma chain (290 aa).

Belongs to the ATPase gamma chain family. As to quaternary structure, F-type ATPases have 2 components, CF(1) - the catalytic core - and CF(0) - the membrane proton channel. CF(1) has five subunits: alpha(3), beta(3), gamma(1), delta(1), epsilon(1). CF(0) has three main subunits: a, b and c.

The protein resides in the cell membrane. Produces ATP from ADP in the presence of a proton gradient across the membrane. The gamma chain is believed to be important in regulating ATPase activity and the flow of protons through the CF(0) complex. In Akkermansia muciniphila (strain ATCC BAA-835 / DSM 22959 / JCM 33894 / BCRC 81048 / CCUG 64013 / CIP 107961 / Muc), this protein is ATP synthase gamma chain.